The primary structure comprises 526 residues: Cytochrome P450 monooxygenase 253 (526 aa).

3 consecutive transmembrane segments (helical) span residues Ile-13–Ile-33, Phe-115–Lys-135, and Ile-306–Leu-326. Cys-451 serves as a coordination point for heme.

Belongs to the cytochrome P450 family. Heme is required as a cofactor.

The protein resides in the membrane. The protein operates within secondary metabolite biosynthesis. Its function is as follows. Cytochrome P450 monooxygenase that is able to use delta(6)-protoilludene as a substrate to produce delta(6)-protoilludene-8-ol. The protein is Cytochrome P450 monooxygenase 253 of Postia placenta (strain ATCC 44394 / Madison 698-R) (Brown rot fungus).